We begin with the raw amino-acid sequence, 422 residues long: Serine hydroxymethyltransferase (422 aa).

(6S)-5,6,7,8-tetrahydrofolate-binding positions include Leu-119 and 123–125 (GHL). N6-(pyridoxal phosphate)lysine is present on Lys-228. Residues Glu-244 and 352–354 (SPF) contribute to the (6S)-5,6,7,8-tetrahydrofolate site.

The protein belongs to the SHMT family. As to quaternary structure, homodimer. Requires pyridoxal 5'-phosphate as cofactor.

It localises to the cytoplasm. It catalyses the reaction (6R)-5,10-methylene-5,6,7,8-tetrahydrofolate + glycine + H2O = (6S)-5,6,7,8-tetrahydrofolate + L-serine. Its pathway is one-carbon metabolism; tetrahydrofolate interconversion. It functions in the pathway amino-acid biosynthesis; glycine biosynthesis; glycine from L-serine: step 1/1. Functionally, catalyzes the reversible interconversion of serine and glycine with tetrahydrofolate (THF) serving as the one-carbon carrier. This reaction serves as the major source of one-carbon groups required for the biosynthesis of purines, thymidylate, methionine, and other important biomolecules. Also exhibits THF-independent aldolase activity toward beta-hydroxyamino acids, producing glycine and aldehydes, via a retro-aldol mechanism. The chain is Serine hydroxymethyltransferase from Magnetococcus marinus (strain ATCC BAA-1437 / JCM 17883 / MC-1).